Here is a 1016-residue protein sequence, read N- to C-terminus: Poly [ADP-ribose] polymerase 1 (1016 aa).

At Ala-2 the chain carries N-acetylalanine. A PARP-type 1 zinc finger spans residues 9–93 (YRVEYAKSGR…TIKKMAETGG (85 aa)). Residues Cys-21 and Cys-24 each coordinate Zn(2+). Phosphoserine is present on Ser-41. Zn(2+) contacts are provided by His-53 and Cys-56. Lys-100 and Lys-108 each carry N6-acetyllysine. Residues 116 to 206 (FGAGYAKSNR…TLKKQLPAIK (91 aa)) form a PARP-type 2 zinc finger. Cys-128 and Cys-131 together coordinate Zn(2+). Lys-134 bears the N6-acetyllysine mark. Zn(2+) contacts are provided by His-162 and Cys-165. Residues Ser-180 and Ser-188 each carry the phosphoserine modification. Lys-206 participates in a covalent cross-link: Glycyl lysine isopeptide (Lys-Gly) (interchain with G-Cter in SUMO1); alternate. Lys-206 is covalently cross-linked (Glycyl lysine isopeptide (Lys-Gly) (interchain with G-Cter in SUMO2); alternate). Short sequence motifs (nuclear localization signal) lie at residues 210–212 (KRK) and 224–229 (KKKSKK). The 135-residue stretch at 228–362 (KKEKDKEIKL…IKKQDRIFPP (135 aa)) folds into the PADR1 zinc-binding domain. Residue Lys-252 forms a Glycyl lysine isopeptide (Lys-Gly) (interchain with G-Cter in SUMO2) linkage. Phosphoserine is present on residues Ser-277 and Ser-280. The segment at 293-335 (GALLPCEECSGQLVFKGDAYYCTGDVTAWTKCMVKTQTPNRKE) is zinc ribbon. Zn(2+) contacts are provided by Cys-298, Cys-301, Cys-314, and Cys-324. The tract at residues 360–390 (FPPESSTPVGAAAPPSAASAPAAVHSGPPDK) is disordered. Residues 365–386 (STPVGAAAPPSAASAPAAVHSG) are compositionally biased toward low complexity. The tract at residues 376–526 (AASAPAAVHS…GTNKSEKRMK (151 aa)) is automodification domain. The region spanning 387 to 478 (PPDKPLSNMK…KSLQELLSTH (92 aa)) is the BRCT domain. Asp-389 bears the PolyADP-ribosyl aspartic acid mark. Glu-409, Glu-415, Glu-437, Glu-446, Glu-447, Glu-450, and Glu-458 each carry polyADP-ribosyl glutamic acid. A Glycyl lysine isopeptide (Lys-Gly) (interchain with G-Cter in SUMO2) cross-link involves residue Lys-469. PolyADP-ribosyl glutamic acid is present on residues Glu-473 and Glu-486. Lys-488 is covalently cross-linked (Glycyl lysine isopeptide (Lys-Gly) (interchain with G-Cter in SUMO1); alternate). Lys-488 is covalently cross-linked (Glycyl lysine isopeptide (Lys-Gly) (interchain with G-Cter in SUMO2); alternate). 2 positions are modified to polyADP-ribosyl glutamic acid: Glu-490 and Glu-493. Residues 494–523 (AVGPKGKSGAAPSKKSKGPVKEEGTNKSEK) are disordered. A compositionally biased stretch (low complexity) spans 496–506 (GPKGKSGAAPS). Ser-501, Ser-506, and Ser-509 each carry ADP-ribosylserine. Residues 512–523 (PVKEEGTNKSEK) are compositionally biased toward basic and acidic residues. Residue Lys-514 forms a Glycyl lysine isopeptide (Lys-Gly) (interchain with G-Cter in SUMO2) linkage. 2 positions are modified to polyADP-ribosyl glutamic acid: Glu-515 and Glu-516. Ser-521 is subject to ADP-ribosylserine. Glu-522 carries the post-translational modification PolyADP-ribosyl glutamic acid. An N6-(ADP-ribosyl)lysine modification is found at Lys-523. A Glycyl lysine isopeptide (Lys-Gly) (interchain with G-Cter in SUMO2) cross-link involves residue Lys-530. Residues 544–640 (NAHVLEKGGK…KNFTKHPKKF (97 aa)) enclose the WGR domain. Thr-596 is modified (phosphothreonine). N6-acetyllysine occurs at positions 602 and 623. Residues 664 to 781 (KSKLPKPVQN…DIEVAYSLLR (118 aa)) form the PARP alpha-helical domain. Lys-750 is covalently cross-linked (Glycyl lysine isopeptide (Lys-Gly) (interchain with G-Cter in SUMO1); alternate). Residue Lys-750 forms a Glycyl lysine isopeptide (Lys-Gly) (interchain with G-Cter in SUMO2); alternate linkage. Residues Ser-784 and Ser-788 each carry the phosphoserine modification. The 227-residue stretch at 790 to 1016 (DPIDVNYEKL…LKFNFKTSLW (227 aa)) folds into the PARP catalytic domain. Residues 864–866 (HGS), Gly-873, Arg-880, and Ser-906 contribute to the NAD(+) site. Glu-990 (for poly [ADP-ribose] polymerase activity) is an active-site residue.

This sequence belongs to the ARTD/PARP family. Homodimer; PARP-type zinc-fingers from separate PARP1 molecules form a dimer module that specifically recognizes DNA strand breaks. Heterodimer; heterodimerizes with PARP2. Interacts (via the PARP catalytic domain) with HPF1. Interacts with NMNAT1. Interacts with nucleosomes; with a preference for nucleosomes containing H2A.X. Interacts with APTX. Component of a base excision repair (BER) complex, containing at least XRCC1, PARP1, PARP2, POLB and LRIG3. Interacts with SRY. The SWAP complex consists of NPM1, NCL, PARP1 and SWAP70. Interacts with TIAM2. Interacts with PARP3; leading to activate PARP1 in absence of DNA. Interacts (when poly-ADP-ribosylated) with CHD1L (via macro domain). Interacts with the DNA polymerase alpha catalytic subunit POLA1; this interaction functions as part of the control of replication fork progression. Interacts with EEF1A1 and TXK. Interacts with RNF4. Interacts with RNF146. Interacts with ZNF423. Interacts with APLF. Interacts with SNAI1 (via zinc fingers); the interaction requires SNAI1 to be poly-ADP-ribosylated and non-phosphorylated (active) by GSK3B. Interacts (when poly-ADP-ribosylated) with PARP9. Interacts with NR4A3; activates PARP1 by improving acetylation of PARP1 and suppressing the interaction between PARP1 and SIRT1. Interacts (via catalytic domain) with PUM3; the interaction inhibits the poly-ADP-ribosylation activity of PARP1 and the degradation of PARP1 by CASP3 following genotoxic stress. Interacts with ZNF365. Interacts with RRP1B. Interacts with TIMELESS; the interaction is direct. Interacts with CGAS; leading to impede the formation of the PARP1-TIMELESS complex. Interacts with KHDC3L, the interaction is increased following the formation of DNA double-strand breaks. Interacts (when auto-poly-ADP-ribosylated) with XRCC1; leading to inhibit PARP1 ADP-ribosyltransferase activity. Interacts with SPINDOC; promoting PARP1 ADP-ribosyltransferase activity. Interacts with BANF1; leading to inhibit PARP1 ADP-ribosyltransferase activity in response to oxidative DNA damage. Interacts (when sumoylated and ubiquitinated) with VCP/p97; leading to its extraction from chromatin. Interacts with YARS1; promoting PARP1 ADP-ribosyltransferase activity. Interacts with PACMP micropeptide; Interacts with PACMP micropeptide; interaction. Interacts (when poly-ADP-ribosylated) with isoform 1 of MACROH2A1; MACROH2A1 specifically binds to poly-ADP-ribose chains and inhibits PARP1 activity, limiting the consumption of nuclear NAD(+). Interacts with CARM1; promoting recruitment to replication forks. Interacts with RECQL. Interacts with ZNF32; the interaction reshapes ZNF432 interacting proteins. Interacts with TPRN; TPRN interacts with a number of DNA damage response proteins, is recruited to sites of DNA damage and may play a role in DNA damage repair. In terms of assembly, interacts (when auto-poly-ADP-ribosylated) with AIFM1. Post-translationally, poly-ADP-ribosylated on serine, glutamate and aspartate residues by autocatalysis. Auto-ADP-ribosylation on serine takes place following interaction with HPF1. Auto poly-ADP-ribosylation on serine residues promotes its dissociation from chromatin. Poly-ADP-ribosylated by PARP2; poly-ADP-ribosylation mediates the recruitment of CHD1L to DNA damage sites. Mono-ADP-ribosylated at Lys-523 by SIRT6 in response to oxidative stress, promoting recruitment to double-strand breaks (DSBs) sites. In terms of processing, S-nitrosylated, leading to inhibit transcription regulation activity. Phosphorylated at Thr-596 by PRKDC in response to DNA damage following virus infection, promoting its translocation to the cytosol. Phosphorylated by TXK. Post-translationally, proteolytically cleaved by caspase-3 (CASP3) and caspase-7 (CASP7) in response to apoptosis to generate the Poly [ADP-ribose] polymerase 1, processed N-terminus and Poly [ADP-ribose] polymerase 1, processed C-terminus forms. In terms of processing, sumoylated with SUMO1 or SUMO2 by PIAS4 following prolonged residence (trapping) to chromatin. Sumoylation promotes ubiquitination by RNF4 and removal from chromatin by VCP/p97. Ubiquitinated by RNF4 following sumoylation by PIAS4 in response to prolonged residence (trapping) to chromatin. Ubiquitination promotes removal from chromatin by VCP/p97.

It localises to the chromosome. The protein resides in the nucleus. The protein localises to the nucleolus. It is found in the cytoplasm. Its subcellular location is the cytosol. The catalysed reaction is NAD(+) + (ADP-D-ribosyl)n-acceptor = nicotinamide + (ADP-D-ribosyl)n+1-acceptor + H(+).. It carries out the reaction L-seryl-[protein] + NAD(+) = O-(ADP-D-ribosyl)-L-seryl-[protein] + nicotinamide + H(+). It catalyses the reaction L-aspartyl-[protein] + NAD(+) = 4-O-(ADP-D-ribosyl)-L-aspartyl-[protein] + nicotinamide. The enzyme catalyses L-glutamyl-[protein] + NAD(+) = 5-O-(ADP-D-ribosyl)-L-glutamyl-[protein] + nicotinamide. The catalysed reaction is L-tyrosyl-[protein] + NAD(+) = O-(ADP-D-ribosyl)-L-tyrosyl-[protein] + nicotinamide + H(+). It carries out the reaction L-histidyl-[protein] + NAD(+) = N(tele)-(ADP-D-ribosyl)-L-histidyl-[protein] + nicotinamide + H(+). ADP-ribosyltransferase activity is regulated via an allosteric activation mechanism. In absence of activation signal, PARP1 is autoinhibited by the PARP alpha-helical domain (also named HD region), which prevents effective NAD(+)-binding. Activity is highly stimulated by signals, such as DNA strand breaks. Binding to damaged DNA unfolds the PARP alpha-helical domain, relieving autoinhibition. Poly-ADP-ribosyltransferase activity is tightly regulated and PARP1 is removed from damaged chromatin following initial poly-ADP-ribosylation of chromatin to avoid prolonged residence (trapping) that has cytotoxic consequences. A number of factors (VCP/p97) or post-translational modifications (auto-poly-ADP-ribosylation or ubiquitination) promote PARP1 removal from chromatin. Its function is as follows. Poly-ADP-ribosyltransferase that mediates poly-ADP-ribosylation of proteins and plays a key role in DNA repair. Mediates glutamate, aspartate, serine, histidine or tyrosine ADP-ribosylation of proteins: the ADP-D-ribosyl group of NAD(+) is transferred to the acceptor carboxyl group of target residues and further ADP-ribosyl groups are transferred to the 2'-position of the terminal adenosine moiety, building up a polymer with an average chain length of 20-30 units. Serine ADP-ribosylation of proteins constitutes the primary form of ADP-ribosylation of proteins in response to DNA damage. Specificity for the different amino acids is conferred by interacting factors, such as HPF1 and NMNAT1. Following interaction with HPF1, catalyzes serine ADP-ribosylation of target proteins; HPF1 confers serine specificity by completing the PARP1 active site. Also catalyzes tyrosine ADP-ribosylation of target proteins following interaction with HPF1. Following interaction with NMNAT1, catalyzes glutamate and aspartate ADP-ribosylation of target proteins; NMNAT1 confers glutamate and aspartate specificity. PARP1 initiates the repair of DNA breaks: recognizes and binds DNA breaks within chromatin and recruits HPF1, licensing serine ADP-ribosylation of target proteins, such as histones (H2BS6ADPr and H3S10ADPr), thereby promoting decompaction of chromatin and the recruitment of repair factors leading to the reparation of DNA strand breaks. HPF1 initiates serine ADP-ribosylation but restricts the polymerase activity of PARP1 in order to limit the length of poly-ADP-ribose chains. In addition to base excision repair (BER) pathway, also involved in double-strand breaks (DSBs) repair: together with TIMELESS, accumulates at DNA damage sites and promotes homologous recombination repair by mediating poly-ADP-ribosylation. Mediates the poly-ADP-ribosylation of a number of proteins, including itself, APLF, CHFR and NFAT5. In addition to proteins, also able to ADP-ribosylate DNA: catalyzes ADP-ribosylation of DNA strand break termini containing terminal phosphates and a 2'-OH group in single- and double-stranded DNA, respectively. Required for PARP9 and DTX3L recruitment to DNA damage sites. PARP1-dependent PARP9-DTX3L-mediated ubiquitination promotes the rapid and specific recruitment of 53BP1/TP53BP1, UIMC1/RAP80, and BRCA1 to DNA damage sites. PARP1-mediated DNA repair in neurons plays a role in sleep: senses DNA damage in neurons and promotes sleep, facilitating efficient DNA repair. In addition to DNA repair, also involved in other processes, such as transcription regulation, programmed cell death, membrane repair, adipogenesis and innate immunity. Acts as a repressor of transcription: binds to nucleosomes and modulates chromatin structure in a manner similar to histone H1, thereby altering RNA polymerase II. Acts both as a positive and negative regulator of transcription elongation, depending on the context. Acts as a positive regulator of transcription elongation by mediating poly-ADP-ribosylation of NELFE, preventing RNA-binding activity of NELFE and relieving transcription pausing. Acts as a negative regulator of transcription elongation in response to DNA damage by catalyzing poly-ADP-ribosylation of CCNT1, disrupting the phase separation activity of CCNT1 and subsequent activation of CDK9. Involved in replication fork progression following interaction with CARM1: mediates poly-ADP-ribosylation at replication forks, slowing fork progression. Poly-ADP-ribose chains generated by PARP1 also play a role in poly-ADP-ribose-dependent cell death, a process named parthanatos. Also acts as a negative regulator of the cGAS-STING pathway. Acts by mediating poly-ADP-ribosylation of CGAS: PARP1 translocates into the cytosol following phosphorylation by PRKDC and catalyzes poly-ADP-ribosylation and inactivation of CGAS. Acts as a negative regulator of adipogenesis: catalyzes poly-ADP-ribosylation of histone H2B on 'Glu-35' (H2BE35ADPr) following interaction with NMNAT1, inhibiting phosphorylation of H2B at 'Ser-36' (H2BS36ph), thereby blocking expression of pro-adipogenetic genes. Involved in the synthesis of ATP in the nucleus, together with NMNAT1, PARG and NUDT5. Nuclear ATP generation is required for extensive chromatin remodeling events that are energy-consuming. Functionally, promotes AIFM1-mediated apoptosis. This form, which translocates into the cytoplasm following cleavage by caspase-3 (CASP3) and caspase-7 (CASP7) in response to apoptosis, is auto-poly-ADP-ribosylated and serves as a poly-ADP-ribose carrier to induce AIFM1-mediated apoptosis. This cleavage form irreversibly binds to DNA breaks and interferes with DNA repair, promoting DNA damage-induced apoptosis. The chain is Poly [ADP-ribose] polymerase 1 (PARP1) from Bos taurus (Bovine).